Consider the following 200-residue polypeptide: Protein Rv0461 (200 aa).

The disordered stretch occupies residues 47-67; that stretch reads DRAGKSWPGSTPKPQEDPVGV. 3 helical membrane-spanning segments follow: residues 102–122, 134–154, and 159–179; these read FVLVVLGVWIGAGEVGLSLFY, VFVVLVYVVACTVGGLILALV, and LITALSLGVMSGPFASVAAAA.

Its subcellular location is the cell membrane. This chain is Protein Rv0461, found in Mycobacterium tuberculosis (strain ATCC 25618 / H37Rv).